The primary structure comprises 490 residues: MEPLTIVSLAVASFLLFAFWALSPKTSKNLPPGPPKLPIIGNIHQLKSPTPHRVLRNLAKKYGPIMHLQLGQVSTVVVSTPRLAREIMKTNDISFADRPTTTTSQIFFYKAQDIGWAPYGEYWRQMKKICTLELLSAKKVRSFSSIREEELRRISKVLESKAGTPVNFTEMTVEMVNNVICKATLGDSCKDQATLIEVLYDVLKTLSAFNLASYYPGLQFLNVILGKKAKWLKMQKQLDDILEDVLKEHRSKGRNKSDQEDLVDVLLRVKDTGGLDFTVTDEHVKAVVLDMLTAGTDTSSATLEWAMTELMRNPHMMKRAQEEVRSVVKGDTITETDLQSLHYLKLIVKETLRLHAPTPLLVPRECRQACNVDGYDIPAKTKILVNAWACGTDPDSWKDAESFIPERFENCPINYMGADFEFIPFGAGRRICPGLTFGLSMVEYPLANFLYHFDWKLPNGLKPHELDITEITGISTSLKHQLKIVPILKS.

A helical; Signal-anchor for type II membrane protein transmembrane segment spans residues Pro-3–Ser-23. N-linked (GlcNAc...) asparagine glycans are attached at residues Asn-167 and Asn-255. Residue Cys-432 participates in heme binding.

Belongs to the cytochrome P450 family. Heme is required as a cofactor.

Its subcellular location is the membrane. It catalyses the reaction germacra-1(10),4,11(13)-trien-12-oate + reduced [NADPH--hemoprotein reductase] + O2 = (+)-costunolide + oxidized [NADPH--hemoprotein reductase] + 2 H2O. It participates in secondary metabolite biosynthesis; terpenoid biosynthesis. Its function is as follows. Involved in the biosynthesis of germacrene-derived sesquiterpene lactones. Component of the parthenolide biosynthetic pathway; parthenolide and conjugates are promising anti-cancer drugs highly active against colon cancer cells. Hydroxylates germacrene A acid to 6-alpha-hydroxy-germacrne A acid, a precursor of sesquiterpene lactones that spontaneously undergoes a lactonization which yields costunolide. The polypeptide is Costunolide synthase (Lactuca sativa (Garden lettuce)).